Here is a 332-residue protein sequence, read N- to C-terminus: Ribosomal RNA small subunit methyltransferase C (332 aa).

Belongs to the methyltransferase superfamily. RsmC family. As to quaternary structure, monomer.

It is found in the cytoplasm. It catalyses the reaction guanosine(1207) in 16S rRNA + S-adenosyl-L-methionine = N(2)-methylguanosine(1207) in 16S rRNA + S-adenosyl-L-homocysteine + H(+). Functionally, specifically methylates the guanine in position 1207 of 16S rRNA in the 30S particle. This Pseudomonas aeruginosa (strain UCBPP-PA14) protein is Ribosomal RNA small subunit methyltransferase C.